Here is a 209-residue protein sequence, read N- to C-terminus: Kynurenine formamidase (209 aa).

Trp-20 serves as a coordination point for substrate. Zn(2+) contacts are provided by His-50, His-54, and Asp-56. His-60 serves as the catalytic Proton donor/acceptor. Zn(2+) is bound by residues His-161 and Glu-173.

The protein belongs to the Cyclase 1 superfamily. KynB family. In terms of assembly, homodimer. Requires Zn(2+) as cofactor.

It catalyses the reaction N-formyl-L-kynurenine + H2O = L-kynurenine + formate + H(+). Its pathway is amino-acid degradation; L-tryptophan degradation via kynurenine pathway; L-kynurenine from L-tryptophan: step 2/2. Its function is as follows. Catalyzes the hydrolysis of N-formyl-L-kynurenine to L-kynurenine, the second step in the kynurenine pathway of tryptophan degradation. The sequence is that of Kynurenine formamidase from Bacillus cereus (strain ZK / E33L).